The following is a 570-amino-acid chain: MAYEKSTDIFDISRSMFLYPWLEYPDRTKELRKAMAPVHLPLSCYQMPKEEFPPSPECWRQHPSKPNSVPYCYFNKPEIYTHWHDLYDQREEREAEKMLRKMRDDHRYIKEVHQTHIQMFHLPMSKLIIKSEMQSRPLEPTWDPLKWQRLRELTKSLESPREDEQLYAAQALGCLRISDKFVMKALQQVAQTGPEKVQYEAYRTLAILGCLNKHVIRALIKQLKEKNEGQRMETLTGLRMALNSWAAVSKDKRTQVGDEGKLVPVLQTLIKKSSSEASLEAALCLGFLRPRSNMVQEFLLQCLCQGLKTQQMKALRMLVKVMHVHSAPVIRAVLDQLCSSSVLEDRFEATQMLKTIGLEQIQAQGLEELTFNLLRRKTHNEPFLAVRQAVAQTVEELKLKPMMMNLVEAQLMNPDATARQEAVISLGVLGIRSPQVFHLLLDLLDAENRQAVKKSLQETLILCASIDPWIQNKLKNKVLSVYEAPKTNVKAEPTRFRKEPENPEELTIQDFRLAKLNPLFTAKSITKVGQKKTPAFPPYCSKPRKHRPQAIGPWQPRIKKQLRVLAEIAK.

This Macaca fascicularis (Crab-eating macaque) protein is Protein HEATR9 (HEATR9).